We begin with the raw amino-acid sequence, 155 residues long: SsrA-binding protein (155 aa).

It belongs to the SmpB family.

It localises to the cytoplasm. Its function is as follows. Required for rescue of stalled ribosomes mediated by trans-translation. Binds to transfer-messenger RNA (tmRNA), required for stable association of tmRNA with ribosomes. tmRNA and SmpB together mimic tRNA shape, replacing the anticodon stem-loop with SmpB. tmRNA is encoded by the ssrA gene; the 2 termini fold to resemble tRNA(Ala) and it encodes a 'tag peptide', a short internal open reading frame. During trans-translation Ala-aminoacylated tmRNA acts like a tRNA, entering the A-site of stalled ribosomes, displacing the stalled mRNA. The ribosome then switches to translate the ORF on the tmRNA; the nascent peptide is terminated with the 'tag peptide' encoded by the tmRNA and targeted for degradation. The ribosome is freed to recommence translation, which seems to be the essential function of trans-translation. The polypeptide is SsrA-binding protein (Streptococcus pyogenes serotype M5 (strain Manfredo)).